Reading from the N-terminus, the 466-residue chain is Histidine--tRNA ligase (466 aa).

It belongs to the class-II aminoacyl-tRNA synthetase family. As to quaternary structure, homodimer.

The protein resides in the cytoplasm. The catalysed reaction is tRNA(His) + L-histidine + ATP = L-histidyl-tRNA(His) + AMP + diphosphate + H(+). The sequence is that of Histidine--tRNA ligase from Bifidobacterium animalis subsp. lactis (strain AD011).